Reading from the N-terminus, the 299-residue chain is GTPase Era (299 aa).

Residues 5–172 (KSGFVSIIGR…IDVLKSFLPE (168 aa)) enclose the Era-type G domain. Residues 13–20 (GRPNVGKS) form a G1 region. 13–20 (GRPNVGKS) contacts GTP. Residues 39–43 (QTTRN) are G2. The interval 60–63 (DTPG) is G3. Residues 60 to 64 (DTPGI) and 122 to 125 (NKID) contribute to the GTP site. Positions 122–125 (NKID) are G4. Positions 151-153 (ISA) are G5. The 78-residue stretch at 203–280 (TSEEIPHAIG…YLELWVKVQR (78 aa)) folds into the KH type-2 domain.

It belongs to the TRAFAC class TrmE-Era-EngA-EngB-Septin-like GTPase superfamily. Era GTPase family. In terms of assembly, monomer.

The protein resides in the cytoplasm. It localises to the cell membrane. In terms of biological role, an essential GTPase that binds both GDP and GTP, with rapid nucleotide exchange. Plays a role in 16S rRNA processing and 30S ribosomal subunit biogenesis and possibly also in cell cycle regulation and energy metabolism. This Staphylococcus epidermidis (strain ATCC 12228 / FDA PCI 1200) protein is GTPase Era.